Here is a 542-residue protein sequence, read N- to C-terminus: Peptide chain release factor 3 (542 aa).

Residues 11-279 (EKRRTFAIIS…AYVEYAPSPR (269 aa)) enclose the tr-type G domain. Residues 20–27 (SHPDAGKT), 88–92 (DTPGH), and 142–145 (NKLD) contribute to the GTP site.

This sequence belongs to the TRAFAC class translation factor GTPase superfamily. Classic translation factor GTPase family. PrfC subfamily.

The protein resides in the cytoplasm. Its function is as follows. Increases the formation of ribosomal termination complexes and stimulates activities of RF-1 and RF-2. It binds guanine nucleotides and has strong preference for UGA stop codons. It may interact directly with the ribosome. The stimulation of RF-1 and RF-2 is significantly reduced by GTP and GDP, but not by GMP. This chain is Peptide chain release factor 3, found in Nitrosococcus oceani (strain ATCC 19707 / BCRC 17464 / JCM 30415 / NCIMB 11848 / C-107).